A 62-amino-acid polypeptide reads, in one-letter code: Photosystem II reaction center X protein (62 aa).

The helical transmembrane segment at 26 to 46 threads the bilayer; that stretch reads IASFFAAALLIVIPAATFLIF.

Belongs to the PsbX family. Type 2 subfamily. In terms of assembly, PSII consists of a core antenna complex that captures photons, and an electron transfer chain that converts photonic excitation into a charge separation. PSII forms dimeric complexes.

Its subcellular location is the cellular thylakoid membrane. Functionally, involved in the binding and/or turnover of quinones at the Q(B) site of Photosystem II. This Prochlorococcus marinus (strain MIT 9515) protein is Photosystem II reaction center X protein.